The following is a 201-amino-acid chain: Imidazole glycerol phosphate synthase subunit HisH (201 aa).

Residues 1-201 form the Glutamine amidotransferase type-1 domain; it reads MIAIIDYGAG…LLKRYEEMIR (201 aa). Cysteine 79 functions as the Nucleophile in the catalytic mechanism. Active-site residues include histidine 181 and glutamate 183.

As to quaternary structure, heterodimer of HisH and HisF.

The protein localises to the cytoplasm. It carries out the reaction 5-[(5-phospho-1-deoxy-D-ribulos-1-ylimino)methylamino]-1-(5-phospho-beta-D-ribosyl)imidazole-4-carboxamide + L-glutamine = D-erythro-1-(imidazol-4-yl)glycerol 3-phosphate + 5-amino-1-(5-phospho-beta-D-ribosyl)imidazole-4-carboxamide + L-glutamate + H(+). The enzyme catalyses L-glutamine + H2O = L-glutamate + NH4(+). The protein operates within amino-acid biosynthesis; L-histidine biosynthesis; L-histidine from 5-phospho-alpha-D-ribose 1-diphosphate: step 5/9. In terms of biological role, IGPS catalyzes the conversion of PRFAR and glutamine to IGP, AICAR and glutamate. The HisH subunit catalyzes the hydrolysis of glutamine to glutamate and ammonia as part of the synthesis of IGP and AICAR. The resulting ammonia molecule is channeled to the active site of HisF. The protein is Imidazole glycerol phosphate synthase subunit HisH of Oceanobacillus iheyensis (strain DSM 14371 / CIP 107618 / JCM 11309 / KCTC 3954 / HTE831).